Consider the following 229-residue polypeptide: 5'-methylthioadenosine/S-adenosylhomocysteine nucleosidase (229 aa).

Residue Glu-12 is the Proton acceptor of the active site. Residues Gly-78, Met-152, and 173–174 (ME) contribute to the substrate site. Asp-197 acts as the Proton donor in catalysis.

This sequence belongs to the PNP/UDP phosphorylase family. MtnN subfamily.

It carries out the reaction S-adenosyl-L-homocysteine + H2O = S-(5-deoxy-D-ribos-5-yl)-L-homocysteine + adenine. The catalysed reaction is S-methyl-5'-thioadenosine + H2O = 5-(methylsulfanyl)-D-ribose + adenine. The enzyme catalyses 5'-deoxyadenosine + H2O = 5-deoxy-D-ribose + adenine. The protein operates within amino-acid biosynthesis; L-methionine biosynthesis via salvage pathway; S-methyl-5-thio-alpha-D-ribose 1-phosphate from S-methyl-5'-thioadenosine (hydrolase route): step 1/2. Its function is as follows. Catalyzes the irreversible cleavage of the glycosidic bond in both 5'-methylthioadenosine (MTA) and S-adenosylhomocysteine (SAH/AdoHcy) to adenine and the corresponding thioribose, 5'-methylthioribose and S-ribosylhomocysteine, respectively. Also cleaves 5'-deoxyadenosine, a toxic by-product of radical S-adenosylmethionine (SAM) enzymes, into 5-deoxyribose and adenine. The chain is 5'-methylthioadenosine/S-adenosylhomocysteine nucleosidase from Oceanobacillus iheyensis (strain DSM 14371 / CIP 107618 / JCM 11309 / KCTC 3954 / HTE831).